The following is a 744-amino-acid chain: Catalase-peroxidase (744 aa).

Positions 108-231 form a cross-link, tryptophyl-tyrosyl-methioninium (Trp-Tyr) (with M-257); it reads WHSAGTYRIS…LAAVQMGLIY (124 aa). The Proton acceptor role is filled by His109. A cross-link (tryptophyl-tyrosyl-methioninium (Tyr-Met) (with W-108)) is located at residues 231-257; that stretch reads YVNPEGPNGNPDPIAAARDIRETFRRM. His272 contributes to the heme b binding site. Residues 353 to 372 form a disordered region; it reads ANQWKPKDGAGAGTVPDAHD.

This sequence belongs to the peroxidase family. Peroxidase/catalase subfamily. In terms of assembly, homodimer or homotetramer. It depends on heme b as a cofactor. In terms of processing, formation of the three residue Trp-Tyr-Met cross-link is important for the catalase, but not the peroxidase activity of the enzyme.

It catalyses the reaction H2O2 + AH2 = A + 2 H2O. The enzyme catalyses 2 H2O2 = O2 + 2 H2O. Its function is as follows. Bifunctional enzyme with both catalase and broad-spectrum peroxidase activity. The polypeptide is Catalase-peroxidase (Frankia casuarinae (strain DSM 45818 / CECT 9043 / HFP020203 / CcI3)).